The chain runs to 73 residues: Large ribosomal subunit protein bL31 (73 aa).

It belongs to the bacterial ribosomal protein bL31 family. Type A subfamily. Part of the 50S ribosomal subunit.

In terms of biological role, binds the 23S rRNA. This Rhodospirillum centenum (strain ATCC 51521 / SW) protein is Large ribosomal subunit protein bL31.